The following is a 502-amino-acid chain: Probable glycine dehydrogenase (decarboxylating) subunit 2 (502 aa).

Lys-273 bears the N6-(pyridoxal phosphate)lysine mark.

Belongs to the GcvP family. C-terminal subunit subfamily. The glycine cleavage system is composed of four proteins: P, T, L and H. In this organism, the P 'protein' is a heterodimer of two subunits. Requires pyridoxal 5'-phosphate as cofactor.

It catalyses the reaction N(6)-[(R)-lipoyl]-L-lysyl-[glycine-cleavage complex H protein] + glycine + H(+) = N(6)-[(R)-S(8)-aminomethyldihydrolipoyl]-L-lysyl-[glycine-cleavage complex H protein] + CO2. In terms of biological role, the glycine cleavage system catalyzes the degradation of glycine. The P protein binds the alpha-amino group of glycine through its pyridoxal phosphate cofactor; CO(2) is released and the remaining methylamine moiety is then transferred to the lipoamide cofactor of the H protein. This chain is Probable glycine dehydrogenase (decarboxylating) subunit 2, found in Thermococcus onnurineus (strain NA1).